A 568-amino-acid chain; its full sequence is MTSITALLPAPRYPTPGPKMSIFTTNAVSMAKNDSVPKYGSRTDWKPTSQADFNDGGAYPEIHIAQYPRNMGKPGSVSSNAITLKMDASGSADYSLIATQGHAADRHVQTSYDSLIPLRERIDAGTVSLEKPGEEAEQSTALATQAAFDKRLAANDKSGTKNKSDPQYIRYTANSMMGTEGGESQKIIKMVDLPQDPLEPPKFKHTKVPGRPASPPAPILRSPPRKLTAQDQKDWAIPSTVSNWKNQKGFTISLDKRMAADGRGLEDVKVNENFAKFSEVLNQNEKTMRDDIGKRREMQQRVAERQAQEQEEKLRELARRARQEREVGDESKGKEKEADGEDDRGRSRERLRSVSRDGDSDRSLSRSLSASDRSYSRSRSPYESRSRGRSYSRSRSPESRFRGRSDSRSRSPGYELERAAKKRKTERLERKREAERDLRLSKMGTQQKIKQLAKENSRDISERVALGAAQPQKLAGEAQFDSRLFSKSGSLQRGFNEDQYYDKSLFSAQEAVQSIYRPSASGDSVAEDTIDRLETEKRFDVLGKAGKGFEGADGEERDGPVRFVRDEE.

3 disordered regions span residues 199–232 (EPPK…AQDQ), 281–449 (LNQN…QQKI), and 545–568 (AGKG…RDEE). Residues 286 to 364 (KTMRDDIGKR…SRDGDSDRSL (79 aa)) are compositionally biased toward basic and acidic residues. Positions 365 to 379 (SRSLSASDRSYSRSR) are enriched in low complexity. Basic and acidic residues-rich tracts occupy residues 395 to 419 (RSPE…LERA), 426 to 440 (ERLE…DLRL), and 557 to 568 (RDGPVRFVRDEE).

The protein belongs to the SNW family. In terms of assembly, associated with the spliceosome.

The protein resides in the nucleus. Its function is as follows. Involved in pre-mRNA splicing. The sequence is that of Pre-mRNA-processing protein 45 (PRP45) from Yarrowia lipolytica (strain CLIB 122 / E 150) (Yeast).